Here is a 134-residue protein sequence, read N- to C-terminus: ATP synthase epsilon chain (134 aa).

It belongs to the ATPase epsilon chain family. In terms of assembly, F-type ATPases have 2 components, CF(1) - the catalytic core - and CF(0) - the membrane proton channel. CF(1) has five subunits: alpha(3), beta(3), gamma(1), delta(1), epsilon(1). CF(0) has three main subunits: a, b and c.

It localises to the cell membrane. In terms of biological role, produces ATP from ADP in the presence of a proton gradient across the membrane. The protein is ATP synthase epsilon chain of Ruminiclostridium cellulolyticum (strain ATCC 35319 / DSM 5812 / JCM 6584 / H10) (Clostridium cellulolyticum).